Consider the following 268-residue polypeptide: Ribosomal RNA small subunit methyltransferase A (268 aa).

Residues Asn-16, Leu-18, Gly-43, Glu-64, Asp-89, and Asn-110 each coordinate S-adenosyl-L-methionine.

This sequence belongs to the class I-like SAM-binding methyltransferase superfamily. rRNA adenine N(6)-methyltransferase family. RsmA subfamily.

The protein localises to the cytoplasm. The enzyme catalyses adenosine(1518)/adenosine(1519) in 16S rRNA + 4 S-adenosyl-L-methionine = N(6)-dimethyladenosine(1518)/N(6)-dimethyladenosine(1519) in 16S rRNA + 4 S-adenosyl-L-homocysteine + 4 H(+). In terms of biological role, specifically dimethylates two adjacent adenosines (A1518 and A1519) in the loop of a conserved hairpin near the 3'-end of 16S rRNA in the 30S particle. May play a critical role in biogenesis of 30S subunits. This is Ribosomal RNA small subunit methyltransferase A from Pseudomonas aeruginosa (strain ATCC 15692 / DSM 22644 / CIP 104116 / JCM 14847 / LMG 12228 / 1C / PRS 101 / PAO1).